The following is a 366-amino-acid chain: Leucine-rich repeat-containing protein 58 (366 aa).

Position 19 is a phosphoserine (S19). 9 LRR repeats span residues 40-61 (ALLRLLLPYNRLTSLPRALGGG), 64-86 (HLQLLDVSGNSLTALGPELLTLS), 87-108 (GLRTLLARNNRLGGPGSLPKGL), 116-138 (SLQVLNLSGNCFQELPASLLELR), 139-161 (ALQTLSLGGNQLQSIPAEIENLR), 162-184 (SLECLYLGGNFIKEIPPELANLP), 185-206 (SLNYLVLCDNKIQSVPPQLSQL), 208-229 (SLRSLSLHNNLLTYLPREILNL), and 231-251 (HLEELSLRGNPLVVRFVRDLT). A compositionally biased stretch (low complexity) spans 337-346 (ASHSSTSQSE). Residues 337–356 (ASHSSTSQSESDSEDEASVA) form a disordered region.

This is Leucine-rich repeat-containing protein 58 (Lrrc58) from Mus musculus (Mouse).